Reading from the N-terminus, the 249-residue chain is Vacuolar iron transporter 1 (249 aa).

Residues 1–36 are Cytoplasmic-facing; sequence MADGANDGGNPGAEEQQRLLDQHKEAHFTAGEIVRD. The helical transmembrane segment at 37–57 threads the bilayer; that stretch reads IIIGVSDGLTVPFALAAGLSG. Topologically, residues 58-63 are vacuolar; that stretch reads ANASSS. The chain crosses the membrane as a helical span at residues 64 to 84; the sequence is IVLTAGIAEVAAGAISMGLGG. The Cytoplasmic segment spans residues 85–170; that stretch reads YLAAKSEADN…PKRALQSAFT (86 aa). Positions 90–165 are cytoplasmic metal binding domain (MBD); the sequence is SEADNYAREL…LEKPDPKRAL (76 aa). Residues Glu-102, Glu-105, Glu-113, Glu-116, Met-149, and Glu-153 each contribute to the Fe cation site. A helical membrane pass occupies residues 171–191; the sequence is IAIAYVLGGLVPLIPYMFIPV. Over 192–194 the chain is Vacuolar; the sequence is ARK. The chain crosses the membrane as a helical span at residues 195 to 215; that stretch reads AVVASVILTLMALLIFGYAKG. The Cytoplasmic segment spans residues 216-226; it reads YFTDNKPFKSA. A helical transmembrane segment spans residues 227 to 247; sequence LQTALIGAIASAAAFGMAKAV. Residues 248 to 249 lie on the Vacuolar side of the membrane; the sequence is QS.

This sequence belongs to the CCC1 family. As to quaternary structure, homodimer. The dimeric interaction is mediated by both the transmembrane domains (TMDs) and the cytoplasmic metal binding domain (MBD).

It is found in the vacuole membrane. The enzyme catalyses Fe(2+)(in) = Fe(2+)(out). Transport of iron ions is inhibited by zinc ions. In terms of biological role, vacuolar iron transporter involved in the transfer of iron ions from the cytosol to the vacuole for intracellular iron storage. Can transport cobalt ions from the cytosol to the vacuole. The protein is Vacuolar iron transporter 1 of Eucalyptus grandis (Flooded gum).